A 38-amino-acid polypeptide reads, in one-letter code: Large ribosomal subunit protein bL36 (38 aa).

It belongs to the bacterial ribosomal protein bL36 family.

The chain is Large ribosomal subunit protein bL36 from Prosthecochloris aestuarii (strain DSM 271 / SK 413).